The chain runs to 202 residues: Nucleoside triphosphate pyrophosphatase (202 aa).

Asp-79 functions as the Proton acceptor in the catalytic mechanism.

The protein belongs to the Maf family. A divalent metal cation is required as a cofactor.

It is found in the cytoplasm. It carries out the reaction a ribonucleoside 5'-triphosphate + H2O = a ribonucleoside 5'-phosphate + diphosphate + H(+). The enzyme catalyses a 2'-deoxyribonucleoside 5'-triphosphate + H2O = a 2'-deoxyribonucleoside 5'-phosphate + diphosphate + H(+). Its function is as follows. Nucleoside triphosphate pyrophosphatase. May have a dual role in cell division arrest and in preventing the incorporation of modified nucleotides into cellular nucleic acids. This chain is Nucleoside triphosphate pyrophosphatase, found in Rhodospirillum rubrum (strain ATCC 11170 / ATH 1.1.1 / DSM 467 / LMG 4362 / NCIMB 8255 / S1).